A 227-amino-acid chain; its full sequence is Uracil-DNA glycosylase (227 aa).

Residue Asp65 is the Proton acceptor of the active site.

It belongs to the uracil-DNA glycosylase (UDG) superfamily. UNG family.

It localises to the cytoplasm. It catalyses the reaction Hydrolyzes single-stranded DNA or mismatched double-stranded DNA and polynucleotides, releasing free uracil.. Its function is as follows. Excises uracil residues from the DNA which can arise as a result of misincorporation of dUMP residues by DNA polymerase or due to deamination of cytosine. The polypeptide is Uracil-DNA glycosylase (Buchnera aphidicola subsp. Cinara cedri (strain Cc)).